The primary structure comprises 529 residues: MSPHFSLTTPLYYVNALPHIGSAYTTIAADVLARFYRLQGYQVRFITGTDEHGQKIERTAQQRGLSPQAHCDEIAAGFQALWQQLNIHYDRFSRTTSPRHHAIVNEFFQRVWDNGDIYLGQQQGWYCVECEEFKEERELLEGRRCPIHVNRTVEWRDERNYFFRLSKYQQALLDHYAEHPDFVQPPSRRNEVLSFIERGLQDFSISRVNLAWGFPVPTDPEQTLYVWFDALLGYVTALLEPEDEPTLANALKTWWPINLHIIGKDILRFHGISWPAMLMSAGLPLPEQIFVHGFLTKDGQKMGKSLGNTLDPFALVAQYGADAVRYYFMKEVEFGRDGDFSETRFVTILNADLANDLGNLLNRTLKMAWKYTDGKVPNVQGAAIPREHPLRQLAEHLSQTYGQGYRQLAFHEVCQQALTLARAGNKFLDEEAPWKRYRAGETAAVAEILYCVLESVRLVAYVLAPIIPQLSEAIYGQLGYSIRFNGSIAPDLLGDRQAQWGVLPASQPLANPEPIFQKLLLPATVADSP.

Residues 12–22 (YYVNALPHIGS) carry the 'HIGH' region motif. Zn(2+) contacts are provided by cysteine 127, cysteine 130, cysteine 145, and histidine 148. A 'KMSKS' region motif is present at residues 301 to 305 (KMGKS). Lysine 304 is a binding site for ATP.

This sequence belongs to the class-I aminoacyl-tRNA synthetase family. MetG type 2A subfamily. In terms of assembly, monomer. Zn(2+) is required as a cofactor.

Its subcellular location is the cytoplasm. It carries out the reaction tRNA(Met) + L-methionine + ATP = L-methionyl-tRNA(Met) + AMP + diphosphate. Functionally, is required not only for elongation of protein synthesis but also for the initiation of all mRNA translation through initiator tRNA(fMet) aminoacylation. The chain is Methionine--tRNA ligase from Thermosynechococcus vestitus (strain NIES-2133 / IAM M-273 / BP-1).